The chain runs to 539 residues: Cytochrome c oxidase subunit 1 homolog, bacteroid (539 aa).

A run of 3 helical transmembrane segments spans residues Thr-4 to Ala-24, Leu-28 to Met-48, and Gly-75 to Leu-95. His-117 lines the heme b pocket. 8 helical membrane passes run Thr-118–Val-138, Phe-154–Ile-174, Val-187–Met-207, Ile-214–Val-234, Gly-265–Ile-285, Leu-298–Leu-318, Leu-330–Leu-350, and Met-368–Ile-388. His-266, His-316, and His-317 together coordinate Cu cation. 2 residues coordinate heme b: His-404 and His-406. 4 helical membrane passes run Val-405–Val-425, His-443–Ile-463, Gln-475–Met-495, and Gly-499–Leu-519.

It belongs to the heme-copper respiratory oxidase family. Requires Cu(2+) as cofactor. Heme b serves as cofactor.

It localises to the cell membrane. The enzyme catalyses 4 Fe(II)-[cytochrome c] + O2 + 8 H(+)(in) = 4 Fe(III)-[cytochrome c] + 2 H2O + 4 H(+)(out). Its pathway is energy metabolism; oxidative phosphorylation. Functionally, cytochrome c oxidase is the component of the respiratory chain that catalyzes the reduction of oxygen to water. Subunits 1-3 form the functional core of the enzyme complex. Co I is the catalytic subunit of the enzyme. Electrons originating in cytochrome c or a quinol are transferred to the bimetallic center formed by a high-spin heme and copper B. The polypeptide is Cytochrome c oxidase subunit 1 homolog, bacteroid (fixN) (Rhizobium meliloti (strain 1021) (Ensifer meliloti)).